A 1145-amino-acid chain; its full sequence is Protein STU1 (1145 aa).

2 HEAT repeats span residues 96 to 134 (TLPLVVDKLGDQKDKFRSLASHSLVTLFSVAPADVEKYV) and 168 to 206 (YVPVLMELLEDADGMVRDAAKNTVIELFRSAPNAAKSDL). Disordered stretches follow at residues 226 to 271 (ELIP…GIDT), 510 to 793 (LLNK…VVDP), and 816 to 839 (PEPVIEPTPEPSASMQADQAPAAS). Positions 229-239 (PTSSRPETPAA) are enriched in low complexity. The segment covering 535–545 (SKSTMGTSKPS) has biased composition (polar residues). 3 stretches are compositionally biased toward low complexity: residues 580-594 (TTTTSSASSKSSGAR), 663-676 (ASHASESSLASPSS), and 696-708 (QSQSTMLSMSSPS).

It belongs to the CLASP family. As to quaternary structure, interacts with microtubules.

The protein resides in the cytoplasm. Its subcellular location is the cytoskeleton. It localises to the nucleus. The protein localises to the spindle. In terms of biological role, microtubule binding protein that promotes the stabilization of dynamic microtubules. Required for mitotic spindle formation. This chain is Protein STU1 (STU1), found in Gibberella zeae (strain ATCC MYA-4620 / CBS 123657 / FGSC 9075 / NRRL 31084 / PH-1) (Wheat head blight fungus).